Reading from the N-terminus, the 386-residue chain is S-adenosylmethionine synthase (386 aa).

Histidine 16 provides a ligand contact to ATP. Aspartate 18 contacts Mg(2+). Glutamate 44 provides a ligand contact to K(+). Residues glutamate 57 and glutamine 100 each coordinate L-methionine. The segment at 100-110 (QSSDIAQGVDR) is flexible loop. Residues 165-167 (DAK), aspartate 240, 246-247 (RK), alanine 263, and lysine 267 contribute to the ATP site. Aspartate 240 lines the L-methionine pocket. Lysine 271 serves as a coordination point for L-methionine.

It belongs to the AdoMet synthase family. Homotetramer; dimer of dimers. It depends on Mg(2+) as a cofactor. Requires K(+) as cofactor.

It localises to the cytoplasm. It carries out the reaction L-methionine + ATP + H2O = S-adenosyl-L-methionine + phosphate + diphosphate. The protein operates within amino-acid biosynthesis; S-adenosyl-L-methionine biosynthesis; S-adenosyl-L-methionine from L-methionine: step 1/1. Functionally, catalyzes the formation of S-adenosylmethionine (AdoMet) from methionine and ATP. The overall synthetic reaction is composed of two sequential steps, AdoMet formation and the subsequent tripolyphosphate hydrolysis which occurs prior to release of AdoMet from the enzyme. This chain is S-adenosylmethionine synthase, found in Francisella philomiragia subsp. philomiragia (strain ATCC 25017 / CCUG 19701 / FSC 153 / O#319-036).